Here is a 387-residue protein sequence, read N- to C-terminus: Cytochrome b (387 aa).

Transmembrane regions (helical) follow at residues 32 to 52 (FGSLLACVLVIQIVIGILLAC), 76 to 98 (FLLRAFHANGASFFFIFLYLHIG), 113 to 133 (TWNIGVIIFLLTIITAFLGYC), and 179 to 199 (FFSLHYLMPFVIAALSVMHLI). Heme b contacts are provided by H82 and H96. Heme b contacts are provided by H183 and H197. H202 is a binding site for a ubiquinone. 4 helical membrane-spanning segments follow: residues 225–245 (YLIKDLITIFIFLIGINYMAF), 289–309 (QLGVIAMLLSILVLLLLPLLD), 321–341 (FGKFFFWTFVADFVILAWIGG), and 348–368 (FITIGAIATIFYFSYFFILIP).

The protein belongs to the cytochrome b family. As to quaternary structure, fungal cytochrome b-c1 complex contains 10 subunits; 3 respiratory subunits, 2 core proteins and 5 low-molecular weight proteins. Cytochrome b-c1 complex is a homodimer. Heme b serves as cofactor.

It localises to the mitochondrion inner membrane. Functionally, component of the ubiquinol-cytochrome c reductase complex (complex III or cytochrome b-c1 complex) that is part of the mitochondrial respiratory chain. The b-c1 complex mediates electron transfer from ubiquinol to cytochrome c. Contributes to the generation of a proton gradient across the mitochondrial membrane that is then used for ATP synthesis. This Schizosaccharomyces pombe (strain 972 / ATCC 24843) (Fission yeast) protein is Cytochrome b (cob).